The primary structure comprises 378 residues: Erythronate-4-phosphate dehydrogenase (378 aa).

Substrate is bound by residues S45 and T66. The NAD(+) site is built by D146 and T175. Residue R208 is part of the active site. D232 contributes to the NAD(+) binding site. The active site involves E237. H254 serves as the catalytic Proton donor. Position 257 (G257) interacts with NAD(+). Y258 contacts substrate.

Belongs to the D-isomer specific 2-hydroxyacid dehydrogenase family. PdxB subfamily. Homodimer.

It localises to the cytoplasm. It catalyses the reaction 4-phospho-D-erythronate + NAD(+) = (R)-3-hydroxy-2-oxo-4-phosphooxybutanoate + NADH + H(+). The protein operates within cofactor biosynthesis; pyridoxine 5'-phosphate biosynthesis; pyridoxine 5'-phosphate from D-erythrose 4-phosphate: step 2/5. In terms of biological role, catalyzes the oxidation of erythronate-4-phosphate to 3-hydroxy-2-oxo-4-phosphonooxybutanoate. This Escherichia coli O6:K15:H31 (strain 536 / UPEC) protein is Erythronate-4-phosphate dehydrogenase.